We begin with the raw amino-acid sequence, 356 residues long: Protein RecA (356 aa).

75 to 82 (GPESSGKT) lines the ATP pocket.

This sequence belongs to the RecA family.

The protein localises to the cytoplasm. Functionally, can catalyze the hydrolysis of ATP in the presence of single-stranded DNA, the ATP-dependent uptake of single-stranded DNA by duplex DNA, and the ATP-dependent hybridization of homologous single-stranded DNAs. It interacts with LexA causing its activation and leading to its autocatalytic cleavage. The chain is Protein RecA from Burkholderia mallei (strain ATCC 23344).